The primary structure comprises 77 residues: UPF0291 protein BLi02035/BL02933 (77 aa).

Positions 57–77 (PEGNDVTPEKLKQEKRNRRLH) are disordered.

Belongs to the UPF0291 family.

Its subcellular location is the cytoplasm. This Bacillus licheniformis (strain ATCC 14580 / DSM 13 / JCM 2505 / CCUG 7422 / NBRC 12200 / NCIMB 9375 / NCTC 10341 / NRRL NRS-1264 / Gibson 46) protein is UPF0291 protein BLi02035/BL02933.